Consider the following 457-residue polypeptide: tRNA-2-methylthio-N(6)-dimethylallyladenosine synthase (457 aa).

The MTTase N-terminal domain occupies 3–120 (KKVYVKTFGC…LPQMIDARRE (118 aa)). Cysteine 12, cysteine 49, cysteine 83, cysteine 157, cysteine 161, and cysteine 164 together coordinate [4Fe-4S] cluster. The Radical SAM core domain maps to 143 to 377 (RVEGPSAFVS…QATIEENVAR (235 aa)). One can recognise a TRAM domain in the interval 380 to 447 (QSMVGKVERI…PHSLRGELVL (68 aa)).

This sequence belongs to the methylthiotransferase family. MiaB subfamily. As to quaternary structure, monomer. Requires [4Fe-4S] cluster as cofactor.

The protein resides in the cytoplasm. The catalysed reaction is N(6)-dimethylallyladenosine(37) in tRNA + (sulfur carrier)-SH + AH2 + 2 S-adenosyl-L-methionine = 2-methylsulfanyl-N(6)-dimethylallyladenosine(37) in tRNA + (sulfur carrier)-H + 5'-deoxyadenosine + L-methionine + A + S-adenosyl-L-homocysteine + 2 H(+). In terms of biological role, catalyzes the methylthiolation of N6-(dimethylallyl)adenosine (i(6)A), leading to the formation of 2-methylthio-N6-(dimethylallyl)adenosine (ms(2)i(6)A) at position 37 in tRNAs that read codons beginning with uridine. This chain is tRNA-2-methylthio-N(6)-dimethylallyladenosine synthase, found in Burkholderia lata (strain ATCC 17760 / DSM 23089 / LMG 22485 / NCIMB 9086 / R18194 / 383).